We begin with the raw amino-acid sequence, 140 residues long: Baculoviral IAP repeat-containing protein 5 (140 aa).

The stretch at 18–88 (RIATFKNWPF…KHSPGCAFLT (71 aa)) is one BIR repeat. Lys23 is subject to N6-acetyllysine. At Thr34 the chain carries Phosphothreonine; by CDK1 and CDK15. Position 48 is a phosphothreonine (Thr48). Zn(2+)-binding residues include Cys57, Cys60, Glu76, His77, His80, and Cys84. 4 positions are modified to N6-acetyllysine: Lys90, Lys110, Lys112, and Lys115. The segment covering 113-129 (IAKETNNKQKEFEETAK) has biased composition (basic and acidic residues). The tract at residues 113–140 (IAKETNNKQKEFEETAKTTRQSIEQLAA) is disordered. A Phosphothreonine; by AURKB modification is found at Thr117. Position 129 is an N6-acetyllysine (Lys129). Polar residues predominate over residues 130–140 (TTRQSIEQLAA).

Belongs to the IAP family. In terms of assembly, monomer or homodimer. Exists as a homodimer in the apo state and as a monomer in the CPC-bound state. The monomer protects cells against apoptosis more efficiently than the dimer. Only the dimeric form is capable of enhancing tubulin stability in cells. When phosphorylated, interacts with LAMTOR5/HBXIP; the resulting complex binds pro-CASP9, as well as active CASP9, but much less efficiently. Component of the chromosomal passenger complex (CPC) composed of at least BIRC5/survivin, CDCA8/borealin, INCENP, AURKB or AURKC; in the complex forms a triple-helix bundle-based subcomplex with INCENP and CDCA8. Interacts with JTB. Interacts (via BIR domain) with histone H3 phosphorylated at 'Thr-3' (H3pT3). Interacts with EVI5. Interacts with GTP-bound RAN in both the S and M phases of the cell cycle. Interacts with USP9X. Interacts with tubulin. Interacts with BIRC2/c-IAP1. The acetylated form at Lys-129 interacts with STAT3. The monomeric form deacetylated at Lys-129 interacts with XPO1/CRM1. The monomeric form interacts with XIAP/BIRC4. Both the dimeric and monomeric form can interact with DIABLO/SMAC. Interacts with BIRC6/bruce. Interacts with FBXL7; this interaction facilitates the polyubiquitination and subsequent proteasomal degradation of BIRC5 by the SCF(FBXL7) E3 ubiquitin-protein ligase complex. Ubiquitinated by the Cul9-RING ubiquitin-protein ligase complex, leading to its degradation. Ubiquitination is required for centrosomal targeting. Deubiquitinated by USP35 or USP38; leading to stabilization. In terms of processing, acetylation at Lys-129 results in its homodimerization, while deacetylation promotes the formation of monomers which heterodimerize with XPO1/CRM1 which facilitates its nuclear export. The acetylated form represses STAT3 transactivation. The dynamic equilibrium between its acetylation and deacetylation at Lys-129 determines its interaction with XPO1/CRM1, its subsequent subcellular localization, and its ability to inhibit STAT3 transactivation. Post-translationally, in vitro phosphorylation at Thr-117 by AURKB prevents interaction with INCENP and localization to mitotic chromosomes. Phosphorylation at Thr-48 by CK2 is critical for its mitotic and anti-apoptotic activities. Phosphorylation at Thr-34 by CDK15 is critical for its anti-apoptotic activity.

Its subcellular location is the cytoplasm. The protein resides in the nucleus. It is found in the chromosome. It localises to the centromere. The protein localises to the cytoskeleton. Its subcellular location is the spindle. The protein resides in the kinetochore. It is found in the midbody. In terms of biological role, multitasking protein that has dual roles in promoting cell proliferation and preventing apoptosis. Component of a chromosome passage protein complex (CPC) which is essential for chromosome alignment and segregation during mitosis and cytokinesis. Acts as an important regulator of the localization of this complex; directs CPC movement to different locations from the inner centromere during prometaphase to midbody during cytokinesis and participates in the organization of the center spindle by associating with polymerized microtubules. Involved in the recruitment of CPC to centromeres during early mitosis via association with histone H3 phosphorylated at 'Thr-3' (H3pT3) during mitosis. The complex with RAN plays a role in mitotic spindle formation by serving as a physical scaffold to help deliver the RAN effector molecule TPX2 to microtubules. May counteract a default induction of apoptosis in G2/M phase. The acetylated form represses STAT3 transactivation of target gene promoters. May play a role in neoplasia. Inhibitor of CASP3 and CASP7. Essential for the maintenance of mitochondrial integrity and function. The sequence is that of Baculoviral IAP repeat-containing protein 5 (Birc5) from Mus musculus (Mouse).